Consider the following 418-residue polypeptide: PP2A regulatory subunit TAP46 (418 aa).

Residues Lys-367–Gly-418 are disordered. Composition is skewed to basic and acidic residues over residues Trp-376–Gln-385 and Glu-393–Pro-406.

It belongs to the IGBP1/TAP42 family.

Its function is as follows. Involved in the regulation of the TOR signaling pathway. Seems to act as a regulator of PP2A catalytic activity. This chain is PP2A regulatory subunit TAP46, found in Oryza sativa subsp. japonica (Rice).